The primary structure comprises 101 residues: Small ribosomal subunit protein uS14 (101 aa).

Residues Leu48 to Arg69 are disordered. The span at Leu51–Gly68 shows a compositional bias: basic and acidic residues.

It belongs to the universal ribosomal protein uS14 family. Part of the 30S ribosomal subunit. Contacts proteins S3 and S10.

In terms of biological role, binds 16S rRNA, required for the assembly of 30S particles and may also be responsible for determining the conformation of the 16S rRNA at the A site. The sequence is that of Small ribosomal subunit protein uS14 from Stenotrophomonas maltophilia (strain R551-3).